A 121-amino-acid chain; its full sequence is Basic phospholipase A2 homolog piratoxin-1 (121 aa).

Disulfide bonds link Cys-26-Cys-115, Cys-28-Cys-44, Cys-43-Cys-95, Cys-49-Cys-121, Cys-50-Cys-88, Cys-57-Cys-81, and Cys-75-Cys-86. The important for membrane-damaging activities in eukaryotes and bacteria; heparin-binding stretch occupies residues 105–117 (KLYRYHLKPFCKK).

Belongs to the phospholipase A2 family. Group II subfamily. K49 sub-subfamily. As to quaternary structure, homodimer; non-covalently linked. Expressed by the venom gland.

The protein localises to the secreted. Its activity is regulated as follows. Rosmarinic acid inhibits the myotoxic activity. Bromophenacyl bromide (BPB) inhibits the myotoxic activity through a covalent binding. Caffeic acid and aristolochic acid, two plant compounds used in folk medicine used to treat envenomation, inhibit the myotoxic activity. Snake venom phospholipase A2 (PLA2) homolog that lacks enzymatic activity. Is myotoxic and displays edema-inducing activities. Induces neuromuscular blockage. A model of myotoxic mechanism has been proposed: an apo Lys49-PLA2 is activated by the entrance of a hydrophobic molecule (e.g. fatty acid) at the hydrophobic channel of the protein leading to a reorientation of a monomer. This reorientation causes a transition between 'inactive' to 'active' states, causing alignment of C-terminal and membrane-docking sites (MDoS) side-by-side and putting the membrane-disruption sites (MDiS) in the same plane, exposed to solvent and in a symmetric position for both monomers. The MDoS region stabilizes the toxin on membrane by the interaction of charged residues with phospholipid head groups. Subsequently, the MDiS region destabilizes the membrane with penetration of hydrophobic residues. This insertion causes a disorganization of the membrane, allowing an uncontrolled influx of ions (i.e. calcium and sodium), and eventually triggering irreversible intracellular alterations and cell death. The protein is Basic phospholipase A2 homolog piratoxin-1 of Bothrops pirajai (Piraja's lancehead).